Here is a 1071-residue protein sequence, read N- to C-terminus: Exportin-1 (1071 aa).

Residues 1–679 (MPAIMTMLAD…QQATKNVDIL (679 aa)) are necessary for HTLV-1 Rex-mediated mRNA export. In terms of domain architecture, Importin N-terminal spans 46–112 (AQEVLTHLKE…KKYVVGLIIK (67 aa)). 6 HEAT repeats span residues 217–240 (QNAP…PLGY), 241–277 (IFET…VSVS), 354–472 (MLLV…YVDT), 515–553 (RFLV…QYPR), 560–597 (KFLK…KCRR), and 602–639 (VQVG…AVGY). Positions 327–450 (CTFLKEHDQL…VREFMKDTDS (124 aa)) are interaction with Ran and nuclear export complex formation. At Ser391 the chain carries Phosphoserine. Positions 411 to 414 (PMLF) are necessary for HTLV-1 Rex multimerization. The segment at 411 to 481 (PMLFKVRLLM…TERIMTEKLH (71 aa)) is interaction with RANBP3. Lys446 carries the N6-acetyllysine modification. Thr448 is subject to Phosphothreonine. A Phosphoserine modification is found at Ser450. Tyr454 is modified (phosphotyrosine). At Lys693 the chain carries N6-acetyllysine. 4 HEAT repeats span residues 775-813 (NFVP…KLGG), 885-916 (TMRN…SFYQ), 917-954 (TYFC…NLVE), and 1002-1039 (FSLN…EERE). The tract at residues 800 to 820 (VLSTMAIIVNKLGGHITAEIP) is interaction with HIV-1 Rev. Ser1031 carries the post-translational modification Phosphoserine.

This sequence belongs to the exportin family. As to quaternary structure, found in a U snRNA export complex with PHAX/RNUXA, NCBP1/CBP80, NCBP2/CBP20, RAN, XPO1 and m7G-capped RNA. Component of a nuclear export receptor complex composed of KPNB1, RAN, SNUPN and XPO1. Found in a trimeric export complex with SNUPN, RAN and XPO1. Found in a nuclear export complex with RANBP3 and RAN. Found in a 60S ribosomal subunit export complex with NMD3, RAN, XPO1. Interacts with DDX3X, NMD3, NUP42, NUP88, NUP214, RANBP3 and TERT. Interacts with NEMF (via its N-terminus). Interacts with the monomeric form of BIRC5/survivin deacetylated at 'Lys-129'. Interacts with DTNBP1 and SERTAD2; the interactions translocate DTNBP1 and SERTAD2 out of the nucleus. Interacts with ATF2. Interacts with SLC35G1 and STIM1. Interacts with DCAF8. Interacts with CPEB3. Interacts with HAX1. Interacts with BOK; translocates to the cytoplasm. Interacts with HSP90AB1. Interacts with LRPPRC; interacts with LRPPRC alone and also when LRPPRC is in complex with EIF4E and with EIF4E sensitivity element (4ESE)-containing mRNAs to form an EIF4E-dependent mRNA export complex. In terms of assembly, (Microbial infection) Interacts with HIV-1 Rev. (Microbial infection) Interacts with HTLV-1 Rex. As to quaternary structure, (Microbial infection) Interacts with influenza A nucleoprotein. In terms of assembly, (Microbial infection) Interacts with Epstein-Barr virus protein BMLF1. (Microbial infection) Part of a tetrameric complex composed of CRM1, importin alpha/beta dimer and the Venezuelan equine encephalitis virus (VEEV) capsid; this complex blocks the receptor-mediated transport through the nuclear pore. As to quaternary structure, (Microbial infection) Interacts with SARS-CoV virus protein ORF9b; this interaction mediates protein ORF9b export out of the nucleus. In terms of tissue distribution, expressed in heart, brain, placenta, lung, liver, skeletal muscle, pancreas, spleen, thymus, prostate, testis, ovary, small intestine, colon and peripheral blood leukocytes. Not expressed in the kidney.

It localises to the cytoplasm. The protein localises to the nucleus. Its subcellular location is the nucleoplasm. The protein resides in the cajal body. It is found in the nucleolus. Functionally, mediates the nuclear export of cellular proteins (cargos) bearing a leucine-rich nuclear export signal (NES) and of RNAs. In the nucleus, in association with RANBP3, binds cooperatively to the NES on its target protein and to the GTPase RAN in its active GTP-bound form (Ran-GTP). Docking of this complex to the nuclear pore complex (NPC) is mediated through binding to nucleoporins. Upon transit of a nuclear export complex into the cytoplasm, disassembling of the complex and hydrolysis of Ran-GTP to Ran-GDP (induced by RANBP1 and RANGAP1, respectively) cause release of the cargo from the export receptor. The directionality of nuclear export is thought to be conferred by an asymmetric distribution of the GTP- and GDP-bound forms of Ran between the cytoplasm and nucleus. Involved in U3 snoRNA transport from Cajal bodies to nucleoli. Binds to late precursor U3 snoRNA bearing a TMG cap. (Microbial infection) Mediates the export of unspliced or incompletely spliced RNAs out of the nucleus from different viruses including HIV-1, HTLV-1 and influenza A. Interacts with, and mediates the nuclear export of HIV-1 Rev and HTLV-1 Rex proteins. Involved in HTLV-1 Rex multimerization. The sequence is that of Exportin-1 (XPO1) from Homo sapiens (Human).